A 278-amino-acid chain; its full sequence is 3-methyl-2-oxobutanoate hydroxymethyltransferase (278 aa).

The Mg(2+) site is built by D43 and D82. Residues 43–44 (DS), D82, and K112 each bind 3-methyl-2-oxobutanoate. Residue E114 coordinates Mg(2+). Catalysis depends on E181, which acts as the Proton acceptor.

The protein belongs to the PanB family. In terms of assembly, homodecamer; pentamer of dimers. Requires Mg(2+) as cofactor.

The protein localises to the cytoplasm. It catalyses the reaction 3-methyl-2-oxobutanoate + (6R)-5,10-methylene-5,6,7,8-tetrahydrofolate + H2O = 2-dehydropantoate + (6S)-5,6,7,8-tetrahydrofolate. Its pathway is cofactor biosynthesis; (R)-pantothenate biosynthesis; (R)-pantoate from 3-methyl-2-oxobutanoate: step 1/2. Functionally, catalyzes the reversible reaction in which hydroxymethyl group from 5,10-methylenetetrahydrofolate is transferred onto alpha-ketoisovalerate to form ketopantoate. The chain is 3-methyl-2-oxobutanoate hydroxymethyltransferase from Bacillus cereus (strain AH187).